The sequence spans 372 residues: Protein REVEILLE 7 (372 aa).

The HTH myb-type domain maps to T71–A125. The segment at residues W98–F121 is a DNA-binding region (H-T-H motif). The segment at M124–S204 is disordered. Residues R145–P155 are compositionally biased toward basic residues. A compositionally biased stretch (pro residues) spans R156–N169. Over residues K178 to S204 the composition is skewed to polar residues.

The protein localises to the nucleus. Its function is as follows. Transcription factor involved in phytochrome A-mediated cotyledon opening. Controlled by the central oscillator mediated by LHY and CCA1. Part of a regulatory circadian feedback loop. Regulates its own expression. The chain is Protein REVEILLE 7 (RVE7) from Arabidopsis thaliana (Mouse-ear cress).